Consider the following 633-residue polypeptide: Probable extracellular metalloproteinase 5 (633 aa).

Residues 1 to 20 (MHGLLLAAAGLLSLPLHVLA) form the signal peptide. Residues 21–244 (HPQPSTNLAG…VHNVVDYVSH (224 aa)) constitute a propeptide that is removed on maturation. Asn-285 is a glycosylation site (N-linked (GlcNAc...) asparagine). A Zn(2+)-binding site is contributed by His-428. Glu-429 is an active-site residue. His-432 contributes to the Zn(2+) binding site. Asn-592 and Asn-621 each carry an N-linked (GlcNAc...) asparagine glycan.

The protein belongs to the peptidase M36 family. The cofactor is Zn(2+).

Its subcellular location is the secreted. Secreted metalloproteinase probably acting as a virulence factor. The sequence is that of Probable extracellular metalloproteinase 5 (MEP5) from Trichophyton verrucosum (strain HKI 0517).